Reading from the N-terminus, the 379-residue chain is Dual-specificity RNA methyltransferase RlmN (379 aa).

Glutamate 97 acts as the Proton acceptor in catalysis. The Radical SAM core domain maps to 103–343 (QGGRGTLCVS…VRTTRGDDID (241 aa)). An intrachain disulfide couples cysteine 110 to cysteine 346. [4Fe-4S] cluster is bound by residues cysteine 117, cysteine 121, and cysteine 124. S-adenosyl-L-methionine contacts are provided by residues 171-172 (GE), serine 203, 225-227 (SLH), and asparagine 303. Catalysis depends on cysteine 346, which acts as the S-methylcysteine intermediate.

It belongs to the radical SAM superfamily. RlmN family. It depends on [4Fe-4S] cluster as a cofactor.

The protein resides in the cytoplasm. The enzyme catalyses adenosine(2503) in 23S rRNA + 2 reduced [2Fe-2S]-[ferredoxin] + 2 S-adenosyl-L-methionine = 2-methyladenosine(2503) in 23S rRNA + 5'-deoxyadenosine + L-methionine + 2 oxidized [2Fe-2S]-[ferredoxin] + S-adenosyl-L-homocysteine. The catalysed reaction is adenosine(37) in tRNA + 2 reduced [2Fe-2S]-[ferredoxin] + 2 S-adenosyl-L-methionine = 2-methyladenosine(37) in tRNA + 5'-deoxyadenosine + L-methionine + 2 oxidized [2Fe-2S]-[ferredoxin] + S-adenosyl-L-homocysteine. Its function is as follows. Specifically methylates position 2 of adenine 2503 in 23S rRNA and position 2 of adenine 37 in tRNAs. m2A2503 modification seems to play a crucial role in the proofreading step occurring at the peptidyl transferase center and thus would serve to optimize ribosomal fidelity. The chain is Dual-specificity RNA methyltransferase RlmN from Pseudomonas aeruginosa (strain ATCC 15692 / DSM 22644 / CIP 104116 / JCM 14847 / LMG 12228 / 1C / PRS 101 / PAO1).